The following is a 235-amino-acid chain: Small ribosomal subunit protein uS2 (235 aa).

It belongs to the universal ribosomal protein uS2 family.

This Synechococcus sp. (strain RCC307) protein is Small ribosomal subunit protein uS2.